A 286-amino-acid chain; its full sequence is MEKLTLPAPAKLNLWLHITGRRADGYHELETVFQFLDHGDELSFSLREDGVIRLHSEIADVPHDSNLIVRAARKLQEQSGTRLGADIWLHKVLPMGGGIGGGSSDAATTLLALAHLWQLDWNEDRLAALGLALGADVPVFVRGHAAFAQGVGEQLTPVDPAEPWYVVLVPQVSVSTAEIFSHPELTRDSLPLKMRPVPEGNSRNDCQPAVEQRYPEVRNALISLGKFTEARMTGTGSCVFGAFPSKAEADRVLALLSETQTGFVAKGSNVSMLHRKLQSLIKKSSS.

Lysine 11 is a catalytic residue. ATP is bound at residue 94-104 (PMGGGIGGGSS). The active site involves aspartate 136.

The protein belongs to the GHMP kinase family. IspE subfamily.

It catalyses the reaction 4-CDP-2-C-methyl-D-erythritol + ATP = 4-CDP-2-C-methyl-D-erythritol 2-phosphate + ADP + H(+). Its pathway is isoprenoid biosynthesis; isopentenyl diphosphate biosynthesis via DXP pathway; isopentenyl diphosphate from 1-deoxy-D-xylulose 5-phosphate: step 3/6. In terms of biological role, catalyzes the phosphorylation of the position 2 hydroxy group of 4-diphosphocytidyl-2C-methyl-D-erythritol. The polypeptide is 4-diphosphocytidyl-2-C-methyl-D-erythritol kinase (Pseudomonas entomophila (strain L48)).